The chain runs to 183 residues: ADP-ribosylation factor-like protein 5 (183 aa).

Residues glycine 27 to threonine 34, aspartate 70 to glutamine 74, and asparagine 129 to aspartate 132 contribute to the GTP site.

This sequence belongs to the small GTPase superfamily. Arf family.

In terms of biological role, may bind and exchange GTP and GDP. This chain is ADP-ribosylation factor-like protein 5 (arl5), found in Dictyostelium discoideum (Social amoeba).